The following is a 115-amino-acid chain: NADH-ubiquinone oxidoreductase chain 3 (115 aa).

3 helical membrane-spanning segments follow: residues 4-24 (LVAL…AFWL), 55-75 (FFLV…LLPL), and 87-107 (MMLT…YEWM).

Belongs to the complex I subunit 3 family. Core subunit of respiratory chain NADH dehydrogenase (Complex I) which is composed of 45 different subunits. Interacts with TMEM186. Interacts with TMEM242.

It localises to the mitochondrion inner membrane. It catalyses the reaction a ubiquinone + NADH + 5 H(+)(in) = a ubiquinol + NAD(+) + 4 H(+)(out). In terms of biological role, core subunit of the mitochondrial membrane respiratory chain NADH dehydrogenase (Complex I) which catalyzes electron transfer from NADH through the respiratory chain, using ubiquinone as an electron acceptor. Essential for the catalytic activity of complex I. This is NADH-ubiquinone oxidoreductase chain 3 from Habromys lophurus (Crested-tailed deer mouse).